Reading from the N-terminus, the 191-residue chain is dCTP deaminase (191 aa).

Residues 112–117 (KSTYAR), 136–138 (TLE), glutamine 157, tyrosine 173, and glutamine 183 contribute to the dCTP site. Residue glutamate 138 is the Proton donor/acceptor of the active site.

It belongs to the dCTP deaminase family. Homotrimer.

It catalyses the reaction dCTP + H2O + H(+) = dUTP + NH4(+). It participates in pyrimidine metabolism; dUMP biosynthesis; dUMP from dCTP (dUTP route): step 1/2. In terms of biological role, catalyzes the deamination of dCTP to dUTP. The chain is dCTP deaminase from Xylella fastidiosa (strain 9a5c).